The sequence spans 267 residues: MADS-box transcription factor 15 (267 aa).

Residues 1 to 61 form the MADS-box domain; that stretch reads MGRGKVQLKR…GKLYEYATDS (61 aa). The K-box domain maps to 88-178; that stretch reads EGNWCHEYRK…QKELVERQKN (91 aa). The tract at residues 179–215 is disordered; it reads VRGQQQVGQWDQTQVQAQAQAQPQAQTSSSSSSMLRD. The span at 182-215 shows a compositional bias: low complexity; that stretch reads QQQVGQWDQTQVQAQAQAQPQAQTSSSSSSMLRD.

In terms of assembly, may interact with the K-box of MADS1 and MADS6.

It localises to the nucleus. Probable transcription factor. The polypeptide is MADS-box transcription factor 15 (MADS15) (Oryza sativa subsp. japonica (Rice)).